The following is a 226-amino-acid chain: UPF0319 protein YPO1442/y2728/YP_1333 (226 aa).

A signal peptide spans 1–20 (MKLGLVAGMLAVCFSFSSVA).

Belongs to the UPF0319 family.

This is UPF0319 protein YPO1442/y2728/YP_1333 from Yersinia pestis.